The chain runs to 201 residues: Protein TraJ (201 aa).

It is found in the cytoplasm. Its function is as follows. This protein is essential for positively regulating the expression of transfer genes that are involved in the conjugal transfer of DNA between bacterial cells. The sequence is that of Protein TraJ (traJ) from Escherichia coli.